The chain runs to 1248 residues: ABC transporter B family member 7 (1248 aa).

The next 6 membrane-spanning stretches (helical) occupy residues 32–52 (IVLM…QPFM), 82–102 (FLYL…CWMV), 158–175 (FTQL…AFIV), 179–201 (LTLA…TYIM), 261–281 (GLGI…AIWY), and 299–321 (VITS…NSFA). The region spanning 35–322 (MVIGTLSAMA…TLPSLNSFAA (288 aa)) is the ABC transmembrane type-1 1 domain. In terms of domain architecture, ABC transporter 1 spans 357–593 (IELRDVYFRY…PEGTYSQLVR (237 aa)). 392–399 (GQSGSGKS) is a binding site for ATP. 2 N-linked (GlcNAc...) asparagine glycosylation sites follow: Asn-473 and Asn-652. The chain crosses the membrane as a helical span at residues 682-702 (VLLLGSLAAVIHGIVFPVQGL). In terms of domain architecture, ABC transmembrane type-1 2 spans 683 to 970 (LLLGSLAAVI…TSTMAPDINK (288 aa)). Residue Asn-720 is glycosylated (N-linked (GlcNAc...) asparagine). Residues 722-742 (SLFWALIFVALGLTDLIVIPL) traverse the membrane as a helical segment. Residue Asn-779 is glycosylated (N-linked (GlcNAc...) asparagine). Helical transmembrane passes span 813-833 (IIGA…MALL), 834-854 (VAPV…GFGA), 914-934 (GSYL…SWLI), and 939-959 (ATFG…VGVT). The ABC transporter 2 domain maps to 1005–1242 (IELQHVSFRY…SGGAYASLVA (238 aa)). 1040-1047 (GESGSGKS) contributes to the ATP binding site. N-linked (GlcNAc...) asparagine glycosylation is found at Asn-1094, Asn-1193, and Asn-1244.

This sequence belongs to the ABC transporter superfamily. ABCB family. Multidrug resistance exporter (TC 3.A.1.201) subfamily.

The protein localises to the membrane. This Arabidopsis thaliana (Mouse-ear cress) protein is ABC transporter B family member 7 (ABCB7).